The sequence spans 224 residues: UPF0111 protein CPn_0681/CP_0066/CPj0681/CpB0708 (224 aa).

This sequence belongs to the UPF0111 family.

The sequence is that of UPF0111 protein CPn_0681/CP_0066/CPj0681/CpB0708 from Chlamydia pneumoniae (Chlamydophila pneumoniae).